Consider the following 490-residue polypeptide: Pup--protein ligase (490 aa).

Residue E9 participates in Mg(2+) binding. R53 is a binding site for ATP. Position 55 (Y55) interacts with Mg(2+). The Proton acceptor role is filled by D57. E63 provides a ligand contact to Mg(2+). S66 provides a ligand contact to ATP. Residues 160–181 are disordered; the sequence is KTHPNGGPVPGSTDPASSTGVP. W441 provides a ligand contact to ATP.

Belongs to the Pup ligase/Pup deamidase family. Pup-conjugating enzyme subfamily.

It catalyses the reaction ATP + [prokaryotic ubiquitin-like protein]-L-glutamate + [protein]-L-lysine = ADP + phosphate + N(6)-([prokaryotic ubiquitin-like protein]-gamma-L-glutamyl)-[protein]-L-lysine.. It functions in the pathway protein degradation; proteasomal Pup-dependent pathway. It participates in protein modification; protein pupylation. Its function is as follows. Catalyzes the covalent attachment of the prokaryotic ubiquitin-like protein modifier Pup to the proteasomal substrate proteins, thereby targeting them for proteasomal degradation. This tagging system is termed pupylation. The ligation reaction involves the side-chain carboxylate of the C-terminal glutamate of Pup and the side-chain amino group of a substrate lysine. This Rothia mucilaginosa (strain DY-18) (Stomatococcus mucilaginosus) protein is Pup--protein ligase.